Here is a 217-residue protein sequence, read N- to C-terminus: Cytochrome c biogenesis ATP-binding export protein CcmA (217 aa).

The region spanning 16–214 is the ABC transporter domain; the sequence is LVLEQLSCER…AHGQAEVTEG (199 aa). 48–55 serves as a coordination point for ATP; sequence GANGAGKT.

Belongs to the ABC transporter superfamily. CcmA exporter (TC 3.A.1.107) family. In terms of assembly, the complex is composed of two ATP-binding proteins (CcmA) and two transmembrane proteins (CcmB).

The protein resides in the cell inner membrane. The catalysed reaction is heme b(in) + ATP + H2O = heme b(out) + ADP + phosphate + H(+). Functionally, part of the ABC transporter complex CcmAB involved in the biogenesis of c-type cytochromes; once thought to export heme, this seems not to be the case, but its exact role is uncertain. Responsible for energy coupling to the transport system. This is Cytochrome c biogenesis ATP-binding export protein CcmA from Alcanivorax borkumensis (strain ATCC 700651 / DSM 11573 / NCIMB 13689 / SK2).